A 395-amino-acid polypeptide reads, in one-letter code: N5-carboxyaminoimidazole ribonucleotide synthase (395 aa).

ATP contacts are provided by residues Lys109, Lys149, Glu184–Ile187, Glu192, and Asn268–Glu269. In terms of domain architecture, ATP-grasp spans Arg113–Ala298.

The protein belongs to the PurK/PurT family. In terms of assembly, homodimer.

It carries out the reaction 5-amino-1-(5-phospho-beta-D-ribosyl)imidazole + hydrogencarbonate + ATP = 5-carboxyamino-1-(5-phospho-D-ribosyl)imidazole + ADP + phosphate + 2 H(+). It participates in purine metabolism; IMP biosynthesis via de novo pathway; 5-amino-1-(5-phospho-D-ribosyl)imidazole-4-carboxylate from 5-amino-1-(5-phospho-D-ribosyl)imidazole (N5-CAIR route): step 1/2. In terms of biological role, catalyzes the ATP-dependent conversion of 5-aminoimidazole ribonucleotide (AIR) and HCO(3)(-) to N5-carboxyaminoimidazole ribonucleotide (N5-CAIR). In Synechococcus elongatus (strain ATCC 33912 / PCC 7942 / FACHB-805) (Anacystis nidulans R2), this protein is N5-carboxyaminoimidazole ribonucleotide synthase.